The chain runs to 73 residues: Conotoxin Im14.3 (73 aa).

Positions 1–17 (MGVFRCCLAAALVVVCL) are cleaved as a signal peptide. Residues 18–35 (SRMGGTEPLESNHEDERR) constitute a propeptide that is removed on maturation. The tract at residues 22–42 (GTEPLESNHEDERRADDTSGD) is disordered. The segment covering 27–38 (ESNHEDERRADD) has biased composition (basic and acidic residues). Positions 44–73 (CVDTNEDCVNWASTGQCEANPSYMRENCRK) constitute a ShKT domain.

Post-translationally, contain 2 disulfide bonds. In terms of tissue distribution, expressed by the venom duct.

It is found in the secreted. Probable neurotoxin. The polypeptide is Conotoxin Im14.3 (Conus imperialis (Imperial cone)).